Here is a 177-residue protein sequence, read N- to C-terminus: Large ribosomal subunit protein uL6 (177 aa).

Belongs to the universal ribosomal protein uL6 family. Part of the 50S ribosomal subunit.

Functionally, this protein binds to the 23S rRNA, and is important in its secondary structure. It is located near the subunit interface in the base of the L7/L12 stalk, and near the tRNA binding site of the peptidyltransferase center. The sequence is that of Large ribosomal subunit protein uL6 from Afipia carboxidovorans (strain ATCC 49405 / DSM 1227 / KCTC 32145 / OM5) (Oligotropha carboxidovorans).